A 359-amino-acid polypeptide reads, in one-letter code: Type-1 angiotensin II receptor (359 aa).

Residues 1-25 (MALNSSADDGIKRIQDDCPKAGRHS) lie on the Extracellular side of the membrane. An N-linked (GlcNAc...) asparagine glycan is attached at asparagine 4. Positions 15 and 17 each coordinate angiotensin II. Disulfide bonds link cysteine 18/cysteine 274 and cysteine 101/cysteine 180. Residues 26–55 (YIFVMIPTLYSIIFVVGIFGNSLVVIVIYF) traverse the membrane as a helical segment. Residues 56-61 (YMKLKT) lie on the Cytoplasmic side of the membrane. A helical transmembrane segment spans residues 62–89 (VASVFLLNLALADLCFLLTLPVWAVYTA). Topologically, residues 90 to 98 (MEYRWPFGN) are extracellular. A helical membrane pass occupies residues 99 to 125 (HLCKIASAGISFNLYASVFLLTCLSID). The Cytoplasmic portion of the chain corresponds to 126 to 141 (RYLAIVHPMKSRLRRT). A helical transmembrane segment spans residues 142–165 (MLVAKVTCVVIWLLAGLASLPAVI). Topologically, residues 166 to 190 (HRNVYFIENTNSTVCAFHYESQNST) are extracellular. Position 167 (arginine 167) interacts with angiotensin II. N-linked (GlcNAc...) asparagine glycosylation is present at asparagine 176. Angiotensin II contacts are provided by phenylalanine 182, histidine 183, and tyrosine 184. An N-linked (GlcNAc...) asparagine glycan is attached at asparagine 188. Residues 191–216 (LPVGLGLTKNILGFMFPFLIILTSYT) traverse the membrane as a helical segment. Lysine 199 is an angiotensin II binding site. Topologically, residues 217 to 239 (LIWKALKKAYEIQKNKPRNDDIF) are cytoplasmic. A helical membrane pass occupies residues 240-268 (RIIMAIVLFFFFSWIPHQIFTFLDVLIQL). Residues 269–278 (GVIRDCKIAD) are Extracellular-facing. Residues 279–304 (VVDTAMPITICIAYFNNCLNPLFYGF) traverse the membrane as a helical segment. Residues 305–359 (LGKKFKKYFLQLLKYIPPKAKSHSSLSTKMSTLSYRPSDNMNSSAKKPASCFEVE) are Cytoplasmic-facing. Cysteine 355 carries the S-palmitoyl cysteine lipid modification.

Belongs to the G-protein coupled receptor 1 family. As to quaternary structure, interacts with MAS1. Interacts with ARRB1. Interacts with FLNA (via filamin repeat 21); increases PKA-mediated phosphorylation of FLNA. In terms of processing, C-terminal Ser or Thr residues may be phosphorylated.

It localises to the cell membrane. Functionally, receptor for angiotensin II, a vasoconstricting peptide, which acts as a key regulator of blood pressure and sodium retention by the kidney. The activated receptor in turn couples to G-alpha proteins G(q) (GNAQ, GNA11, GNA14 or GNA15) and thus activates phospholipase C and increases the cytosolic Ca(2+) concentrations, which in turn triggers cellular responses such as stimulation of protein kinase C. This is Type-1 angiotensin II receptor (AGTR1) from Meriones unguiculatus (Mongolian jird).